Here is a 386-residue protein sequence, read N- to C-terminus: Chaperone protein DnaJ (386 aa).

One can recognise a J domain in the interval 5 to 70 (DYYEVLGVER…QKRAAYDRYG (66 aa)). Residues 138-216 (GKDETIHVPQ…CGGHGQVKEE (79 aa)) form a CR-type zinc finger. Zn(2+)-binding residues include Cys-151, Cys-154, Cys-168, Cys-171, Cys-190, Cys-193, Cys-204, and Cys-207. CXXCXGXG motif repeat units follow at residues 151–158 (CRPCEGTG), 168–175 (CETCGGHG), 190–197 (CHICQGRG), and 204–211 (CKTCGGHG).

It belongs to the DnaJ family. Homodimer. It depends on Zn(2+) as a cofactor.

Its subcellular location is the cytoplasm. Its function is as follows. Participates actively in the response to hyperosmotic and heat shock by preventing the aggregation of stress-denatured proteins and by disaggregating proteins, also in an autonomous, DnaK-independent fashion. Unfolded proteins bind initially to DnaJ; upon interaction with the DnaJ-bound protein, DnaK hydrolyzes its bound ATP, resulting in the formation of a stable complex. GrpE releases ADP from DnaK; ATP binding to DnaK triggers the release of the substrate protein, thus completing the reaction cycle. Several rounds of ATP-dependent interactions between DnaJ, DnaK and GrpE are required for fully efficient folding. Also involved, together with DnaK and GrpE, in the DNA replication of plasmids through activation of initiation proteins. This Hyphomonas neptunium (strain ATCC 15444) protein is Chaperone protein DnaJ.